The chain runs to 430 residues: tRNA(Ile)-lysidine synthase (430 aa).

ATP is bound at residue 21–26; the sequence is SGGLDS.

Belongs to the tRNA(Ile)-lysidine synthase family.

The protein localises to the cytoplasm. The enzyme catalyses cytidine(34) in tRNA(Ile2) + L-lysine + ATP = lysidine(34) in tRNA(Ile2) + AMP + diphosphate + H(+). In terms of biological role, ligates lysine onto the cytidine present at position 34 of the AUA codon-specific tRNA(Ile) that contains the anticodon CAU, in an ATP-dependent manner. Cytidine is converted to lysidine, thus changing the amino acid specificity of the tRNA from methionine to isoleucine. The protein is tRNA(Ile)-lysidine synthase of Salmonella heidelberg (strain SL476).